The chain runs to 353 residues: MEKTLETVPLERKKREKEQFRKLFIGGLSFETTEESLRNYYEQWGKLTDCVVMRDPASKRSRGFGFVTFSSMAEVDAAMAARPHSIDGRVVEPKRAVAREESGKPGAHVTVKKLFVGGIKEDTEEHHLRDYFEEYGKIDTIEIITDRQSGKKRGFGFVTFDDHDPVDKIVLQKYHTINGHNAEVRKALSRQEMQEVQSSRSGRGGNFGFGDSRGGGGNFGPGPGSNFRGGSDGYGSGRGFGDGYNGYGGGPGGGNFGGSPGYGGGRGGYGGGGPGYGNQGGGYGGGYDNYGGGNYGSGNYNDFGNYNQQPSNYGPMKSGNFGGSRNMGGPYGGGNYGPGGSGGSGGYGGRSRY.

Methionine 1 is modified (N-acetylmethionine). The residue at position 4 (threonine 4) is a Phosphothreonine. Leucine 5 participates in a covalent cross-link: Glycyl lysine isopeptide (Lys-Gly) (interchain with G-Cter in SUMO2). A Nuclear localization signal motif is present at residues 9–15 (PLERKKR). RRM domains are found at residues 21–104 (RKLF…ESGK) and 112–191 (KKLF…LSRQ). A Glycyl lysine isopeptide (Lys-Gly) (interchain with G-Cter in SUMO2) cross-link involves residue lysine 22. The residue at position 29 (serine 29) is a Phosphoserine. Position 38 is an omega-N-methylarginine (arginine 38). At serine 85 the chain carries Phosphoserine. At lysine 104 the chain carries N6,N6-dimethyllysine; alternate. Lysine 104 participates in a covalent cross-link: Glycyl lysine isopeptide (Lys-Gly) (interchain with G-Cter in SUMO2); alternate. Glycyl lysine isopeptide (Lys-Gly) (interchain with G-Cter in SUMO2) cross-links involve residues lysine 112, lysine 120, and lysine 137. Residue threonine 140 is modified to Phosphothreonine. Serine 149 bears the Phosphoserine mark. A Glycyl lysine isopeptide (Lys-Gly) (interchain with G-Cter in SUMO2) cross-link involves residue lysine 152. Threonine 159 carries the phosphothreonine modification. Residues lysine 168 and lysine 173 each participate in a glycyl lysine isopeptide (Lys-Gly) (interchain with G-Cter in SUMO2); alternate cross-link. An N6-acetyllysine; alternate mark is found at lysine 168 and lysine 173. Position 176 is a phosphothreonine (threonine 176). Lysine 186 participates in a covalent cross-link: Glycyl lysine isopeptide (Lys-Gly) (interchain with G-Cter in SUMO2). Residues serine 189 and serine 201 each carry the phosphoserine modification. The segment at 193-353 (MQEVQSSRSG…SGGYGGRSRY (161 aa)) is disordered. The segment covering 202-223 (GRGGNFGFGDSRGGGGNFGPGP) has biased composition (gly residues). Arginine 203 is subject to Asymmetric dimethylarginine; alternate. The residue at position 203 (arginine 203) is a Dimethylated arginine; alternate. Arginine 203 is subject to Omega-N-methylarginine; alternate. At serine 212 the chain carries Phosphoserine. Residue arginine 213 is modified to Asymmetric dimethylarginine; alternate. Arginine 213 carries the dimethylated arginine; alternate modification. Arginine 213 is modified (omega-N-methylarginine; alternate). Serine 225 is modified (phosphoserine). Arginine 228 carries the post-translational modification Omega-N-methylarginine. A phosphoserine mark is found at serine 231 and serine 236. Arginine 238 is subject to Omega-N-methylarginine. The residue at position 259 (serine 259) is a Phosphoserine. Arginine 266 is subject to Asymmetric dimethylarginine; alternate. Arginine 266 bears the Omega-N-methylarginine; alternate mark. Residues 308 to 347 (QQPSNYGPMKSGNFGGSRNMGGPYGGGNYGPGGSGGSGGY) are nuclear targeting sequence. A compositionally biased stretch (gly residues) spans 320 to 353 (NFGGSRNMGGPYGGGNYGPGGSGGSGGYGGRSRY). The residue at position 324 (serine 324) is a Phosphoserine. Arginine 325 bears the Omega-N-methylarginine mark. Tyrosine 331 carries the post-translational modification Phosphotyrosine. Phosphoserine occurs at positions 341 and 344. Tyrosine 347 bears the Phosphotyrosine mark. At arginine 350 the chain carries Omega-N-methylarginine.

Homodimer; dimerization is required for nucleocytoplasmic translocation. Identified in the spliceosome C complex. Identified in a IGF2BP1-dependent mRNP granule complex containing untranslated mRNAs. Interacts with IGF2BP1. Interacts with C9orf72. Interacts with DGCR8. Interacts with TARDBP. Interacts with CKAP5. Interacts with TBK1. Interacts with STING1. Interacts with SRC. Interacts with PPIA/CYPA. Interacts (via C-terminus) with FAM76B; the interaction results in retention of HNRNPA2B1 in the nucleus and inhibition of the NF-kappa-B-mediated inflammatory pathway. Interacts with NF-kappa-B inhibitors NFKBIA and NFKBIE; the interaction may be mediated by the RRM2 domain of HNRNPA2B1, and HNRNPA2B1 may interact simultaneously with FAM76B and either NFKBIA or NFKBIE to form a complex. Post-translationally, sumoylated in exosomes, promoting miRNAs-binding. Asymmetric dimethylation at Arg-266 constitutes the major methylation site. According to a report, methylation affects subcellular location and promotes nuclear localization. According to another report, methylation at Arg-266 does not influence nucleocytoplasmic shuttling.

Its subcellular location is the nucleus. The protein resides in the nucleoplasm. The protein localises to the cytoplasm. It localises to the cytoplasmic granule. It is found in the secreted. Its subcellular location is the extracellular exosome. Its function is as follows. Heterogeneous nuclear ribonucleoprotein (hnRNP) that associates with nascent pre-mRNAs, packaging them into hnRNP particles. The hnRNP particle arrangement on nascent hnRNA is non-random and sequence-dependent and serves to condense and stabilize the transcripts and minimize tangling and knotting. Packaging plays a role in various processes such as transcription, pre-mRNA processing, RNA nuclear export, subcellular location, mRNA translation and stability of mature mRNAs. Forms hnRNP particles with at least 20 other different hnRNP and heterogeneous nuclear RNA in the nucleus. Involved in transport of specific mRNAs to the cytoplasm in oligodendrocytes and neurons: acts by specifically recognizing and binding the A2RE (21 nucleotide hnRNP A2 response element) or the A2RE11 (derivative 11 nucleotide oligonucleotide) sequence motifs present on some mRNAs, and promotes their transport to the cytoplasm. Specifically binds single-stranded telomeric DNA sequences, protecting telomeric DNA repeat against endonuclease digestion. Also binds other RNA molecules, such as primary miRNA (pri-miRNAs): acts as a nuclear 'reader' of the N6-methyladenosine (m6A) mark by specifically recognizing and binding a subset of nuclear m6A-containing pri-miRNAs. Binding to m6A-containing pri-miRNAs promotes pri-miRNA processing by enhancing binding of DGCR8 to pri-miRNA transcripts. Involved in miRNA sorting into exosomes following sumoylation, possibly by binding (m6A)-containing pre-miRNAs. Acts as a regulator of efficiency of mRNA splicing, possibly by binding to m6A-containing pre-mRNAs. Plays a role in the splicing of pyruvate kinase PKM by binding repressively to sequences flanking PKM exon 9, inhibiting exon 9 inclusion and resulting in exon 10 inclusion and production of the PKM M2 isoform. Also plays a role in the activation of the innate immune response. Mechanistically, senses the presence of viral DNA in the nucleus, homodimerizes and is demethylated by JMJD6. In turn, translocates to the cytoplasm where it activates the TBK1-IRF3 pathway, leading to interferon alpha/beta production. In terms of biological role, (Microbial infection) Involved in the transport of HIV-1 genomic RNA out of the nucleus, to the microtubule organizing center (MTOC), and then from the MTOC to the cytoplasm: acts by specifically recognizing and binding the A2RE (21 nucleotide hnRNP A2 response element) sequence motifs present on HIV-1 genomic RNA, and promotes its transport. This is Heterogeneous nuclear ribonucleoproteins A2/B1 (HNRNPA2B1) from Homo sapiens (Human).